The following is a 169-amino-acid chain: S-ribosylhomocysteine lyase (169 aa).

Fe cation-binding residues include His54, His58, and Cys128.

It belongs to the LuxS family. As to quaternary structure, homodimer. Requires Fe cation as cofactor.

The enzyme catalyses S-(5-deoxy-D-ribos-5-yl)-L-homocysteine = (S)-4,5-dihydroxypentane-2,3-dione + L-homocysteine. Involved in the synthesis of autoinducer 2 (AI-2) which is secreted by bacteria and is used to communicate both the cell density and the metabolic potential of the environment. The regulation of gene expression in response to changes in cell density is called quorum sensing. Catalyzes the transformation of S-ribosylhomocysteine (RHC) to homocysteine (HC) and 4,5-dihydroxy-2,3-pentadione (DPD). The chain is S-ribosylhomocysteine lyase from Shewanella loihica (strain ATCC BAA-1088 / PV-4).